Consider the following 305-residue polypeptide: U6 small nuclear RNA (adenine-(43)-N(6))-methyltransferase (305 aa).

Residues Arg-87, Gly-112, Glu-135, Thr-166, and Asn-188 each contribute to the S-adenosyl-L-methionine site. Residues 197-221 (PNPLGGNTRNPERRPAPNNARTGSQ) are disordered.

The protein belongs to the methyltransferase superfamily. METTL16/RlmF family.

It catalyses the reaction adenosine in U6 snRNA + S-adenosyl-L-methionine = N(6)-methyladenosine in U6 snRNA + S-adenosyl-L-homocysteine + H(+). In terms of biological role, RNA N6-methyltransferase that mediates N6-methylation of adenine of U6 small nuclear RNA (U6 snRNA). This chain is U6 small nuclear RNA (adenine-(43)-N(6))-methyltransferase, found in Drosophila melanogaster (Fruit fly).